Reading from the N-terminus, the 157-residue chain is Cytochrome c-type biogenesis protein CcmE (157 aa).

Topologically, residues 1 to 8 (MNPLRRKR) are cytoplasmic. The helical; Signal-anchor for type II membrane protein transmembrane segment at 9–29 (LLIILAVLGGVGLALTLALSA) threads the bilayer. Residues 30 to 157 (LKENINLFYT…ASMPARQADR (128 aa)) lie on the Periplasmic side of the membrane. Heme-binding residues include His-124 and Tyr-128. Residues 132-157 (EVSKALRESGQATPAPASMPARQADR) form a disordered region.

This sequence belongs to the CcmE/CycJ family.

It localises to the cell inner membrane. In terms of biological role, heme chaperone required for the biogenesis of c-type cytochromes. Transiently binds heme delivered by CcmC and transfers the heme to apo-cytochromes in a process facilitated by CcmF and CcmH. This chain is Cytochrome c-type biogenesis protein CcmE, found in Pseudomonas syringae pv. tomato (strain ATCC BAA-871 / DC3000).